Reading from the N-terminus, the 289-residue chain is ATP synthase gamma chain (289 aa).

This sequence belongs to the ATPase gamma chain family. As to quaternary structure, F-type ATPases have 2 components, CF(1) - the catalytic core - and CF(0) - the membrane proton channel. CF(1) has five subunits: alpha(3), beta(3), gamma(1), delta(1), epsilon(1). CF(0) has three main subunits: a, b and c.

The protein localises to the cell inner membrane. In terms of biological role, produces ATP from ADP in the presence of a proton gradient across the membrane. The gamma chain is believed to be important in regulating ATPase activity and the flow of protons through the CF(0) complex. The chain is ATP synthase gamma chain from Cereibacter sphaeroides (strain ATCC 17029 / ATH 2.4.9) (Rhodobacter sphaeroides).